The following is a 282-amino-acid chain: D-alanine aminotransferase (282 aa).

Tyr-32 is a binding site for substrate. Residue Arg-51 coordinates pyridoxal 5'-phosphate. Positions 99 and 101 each coordinate substrate. The active-site Proton acceptor is Lys-146. Lys-146 bears the N6-(pyridoxal phosphate)lysine mark. Residue Glu-178 participates in pyridoxal 5'-phosphate binding.

This sequence belongs to the class-IV pyridoxal-phosphate-dependent aminotransferase family. Homodimer. The cofactor is pyridoxal 5'-phosphate.

It catalyses the reaction D-alanine + 2-oxoglutarate = D-glutamate + pyruvate. Its function is as follows. Acts on the D-isomers of alanine, leucine, aspartate, glutamate, aminobutyrate, norvaline and asparagine. The enzyme transfers an amino group from a substrate D-amino acid to the pyridoxal phosphate cofactor to form pyridoxamine and an alpha-keto acid in the first half-reaction. The second half-reaction is the reverse of the first, transferring the amino group from the pyridoxamine to a second alpha-keto acid to form the product D-amino acid via a ping-pong mechanism. This is an important process in the formation of D-alanine and D-glutamate, which are essential bacterial cell wall components. The sequence is that of D-alanine aminotransferase (dat) from Staphylococcus aureus (strain MSSA476).